The chain runs to 202 residues: Nucleoside triphosphate pyrophosphatase (202 aa).

Asp77 serves as the catalytic Proton acceptor.

This sequence belongs to the Maf family. A divalent metal cation serves as cofactor.

The protein resides in the cytoplasm. The enzyme catalyses a ribonucleoside 5'-triphosphate + H2O = a ribonucleoside 5'-phosphate + diphosphate + H(+). It carries out the reaction a 2'-deoxyribonucleoside 5'-triphosphate + H2O = a 2'-deoxyribonucleoside 5'-phosphate + diphosphate + H(+). In terms of biological role, nucleoside triphosphate pyrophosphatase. May have a dual role in cell division arrest and in preventing the incorporation of modified nucleotides into cellular nucleic acids. This chain is Nucleoside triphosphate pyrophosphatase, found in Rickettsia canadensis (strain McKiel).